The primary structure comprises 264 residues: Short chain dehydrogenase/reductase AacuN (264 aa).

The NADP(+) site is built by Ile-24, Asp-70, Asn-97, and Arg-130. Active-site proton donor residues include Ser-146, Ser-147, and Tyr-161. Residues Tyr-161, Lys-165, and Thr-196 each contribute to the NADP(+) site. Catalysis depends on Lys-165, which acts as the Lowers pKa of active site Tyr.

The protein belongs to the short-chain dehydrogenases/reductases (SDR) family.

The catalysed reaction is 3,8,9,10-tetrahydroxy-6-methyl-1,4-dihydroanthracen-1-one + NADPH + H(+) = (3R)-3,8,9,10-tetrahydroxy-6-methyl-1,2,3,4-tetrahydroanthracen-1-one + NADP(+). Its pathway is secondary metabolite biosynthesis. Atrochrysone carboxylic acid synthase; part of the gene cluster that mediates the biosynthesis of the tetrahydroxanthone dimer secalonic acid D. The pathway begins with the synthesis of atrochrysone thioester by the polyketide synthase AacuL. The atrochrysone carboxyl ACP thioesterase AacuM then breaks the thioester bond and releases the atrochrysone carboxylic acid from AacuL. Atrochrysone carboxylic acid is decarboxylated by the decarboxylase AacuI, and oxidized by the anthrone oxygenase AacuG to yield emodin. Emodin is then reduced to emodin hydroquinone by a yet unidentified oxidoreductase. A-ring reduction by the short chain dehydrogenase AacuN, dehydration by the scytalone dehydratase-like protein AacuK and probable spontaneous re-oxidation, results in overall deoxygenation to chrysophanol. Baeyer-Villiger oxidation by the Baeyer-Villiger monooxygenase (BVMO) AacuH then yields monodictyphenone. Monodictyphenone is transformed into compounds with the tetrahydroxanthone skeleton via methylesterification by the methyltransferase AacuQ, followed by the action of the flavin-dependent monooxygenase AacuC, the isomerase AacuP, and the short chain dehydrogenase/reductase AacuF or AacuD. AacuF and AacuD should accept the same compound as a substrate but perform the ketoreduction with a different stereoselectivity, thus yielding blennolides B and A, respectively. In the final step of the biosynthesis, the cytochrome P450 monooxygenase AacuE accepts blennolide B and/or blennolide A to conduct the dimerization reaction to furnish the tetrahydroxanthone dimers, secalonic acids D, B, and F. The chain is Short chain dehydrogenase/reductase AacuN from Aspergillus aculeatus (strain ATCC 16872 / CBS 172.66 / WB 5094).